Here is a 95-residue protein sequence, read N- to C-terminus: Selenoprotein K (95 aa).

A helical membrane pass occupies residues 20–42 (LSFITDFFWGIAEFVVLFFRTLL). Positions 47-95 (KKRRGYGSSSDSRYDDGRGPPGNPPRRRMGRINHLQGPNPPPMAGGUGR) are disordered. Residue selenocysteine 93 is a non-standard amino acid, selenocysteine.

The protein belongs to the selenoprotein K family. Interacts with DERL1, DERL2, DERL3 and SELENOS. The SELENOK-SELENOS complex interacts with VCP. Interacts with ZDHHC6. Cleaved by CAPN2/m-calpain in resting macrophages but not in activated macrophages. Macrophage activation up-regulates expression of the calpain inhibitor CAST/calpastatin, resulting in inhibition of CAPN2 activity. Post-translationally, truncated SELENOK proteins produced by failed UGA/Sec decoding are ubiquitinated by the CRL2(KLHDC2) complex, which recognizes the diglycine (Gly-Gly) at the C-terminus of truncated SELENOK proteins.

It localises to the endoplasmic reticulum membrane. Its subcellular location is the cell membrane. Functionally, required for Ca(2+) flux in immune cells and plays a role in T-cell proliferation and in T-cell and neutrophil migration. Involved in endoplasmic reticulum-associated degradation (ERAD) of soluble glycosylated proteins. Required for palmitoylation and cell surface expression of CD36 and involved in macrophage uptake of low-density lipoprotein and in foam cell formation. Together with ZDHHC6, required for palmitoylation of ITPR1 in immune cells, leading to regulate ITPR1 stability and function. Plays a role in protection of cells from ER stress-induced apoptosis. Protects cells from oxidative stress when overexpressed in cardiomyocytes. In Bos taurus (Bovine), this protein is Selenoprotein K.